The primary structure comprises 494 residues: Probable malate:quinone oxidoreductase (494 aa).

Belongs to the MQO family. FAD is required as a cofactor.

It carries out the reaction (S)-malate + a quinone = a quinol + oxaloacetate. Its pathway is carbohydrate metabolism; tricarboxylic acid cycle; oxaloacetate from (S)-malate (quinone route): step 1/1. In Helicobacter hepaticus (strain ATCC 51449 / 3B1), this protein is Probable malate:quinone oxidoreductase.